The following is a 158-amino-acid chain: Peroxidase (158 aa).

Pro2 serves as a coordination point for substrate. His32 is a binding site for heme b. Position 33 (Thr33) interacts with Ca(2+). Cysteines 39 and 64 form a disulfide. Asn48 carries an N-linked (GlcNAc...) asparagine glycan. Ca(2+)-binding residues include Asp78, Thr81, and Asp86.

The protein belongs to the peroxidase family. Classical plant (class III) peroxidase subfamily. Ca(2+) serves as cofactor. Requires heme b as cofactor.

It carries out the reaction 2 a phenolic donor + H2O2 = 2 a phenolic radical donor + 2 H2O. Functionally, removal of H(2)O(2), oxidation of toxic reductants, biosynthesis and degradation of lignin, suberization, auxin catabolism, response to environmental stresses such as wounding, pathogen attack and oxidative stress. These functions might be dependent on each isozyme/isoform in each plant tissue. This Lupinus polyphyllus (Large-leaved lupine) protein is Peroxidase.